The following is a 317-amino-acid chain: MNKFKGNKVVLIGNGAVGSSYAFSLVNQSIVDELVIIDLDTEKVRGDVMDLKHATPYSPTTVRVKAGEYSDCHDADLVVICAGAAQKPGETRLDLVSKNLKIFKSIVGEVMASKFDGIFLVATNPVDILVYATWKFSGLPKERVIGSGTILDSARFRLLLSEAFDVAPRSVDAQIIGEHGDTELPVWSHANIAGQPLKTLLEQRPEGKAQIEQIFVQTRDAAYDIIQAKGATYYGVAMGLARITEAIFRNEDAVLTVSALLEGEYDEEDVYIGVPAVINRNGIRNVVEIPLNDEEQSKFAHSAKTLKDIMAEAEELK.

Residues Val-17, Asp-38, Lys-43, Tyr-69, and 83–84 contribute to the NAD(+) site; that span reads GA. 2 residues coordinate substrate: Gln-86 and Arg-92. NAD(+) is bound by residues Ser-105, 122-124, and Ser-147; that span reads ATN. 124 to 127 is a binding site for substrate; that stretch reads NPVD. 152-155 lines the substrate pocket; the sequence is DSAR. The active-site Proton acceptor is the His-179. A Phosphotyrosine modification is found at Tyr-223. Thr-232 contributes to the substrate binding site.

Belongs to the LDH/MDH superfamily. LDH family. In terms of assembly, homotetramer.

Its subcellular location is the cytoplasm. The enzyme catalyses (S)-lactate + NAD(+) = pyruvate + NADH + H(+). It participates in fermentation; pyruvate fermentation to lactate; (S)-lactate from pyruvate: step 1/1. Its function is as follows. Catalyzes the conversion of lactate to pyruvate (Potential). Appears to be the primary factor that allows S.aureus growth during nitrosative stress in both aerobically and anaerobically cultured cells. The polypeptide is L-lactate dehydrogenase 1 (Staphylococcus aureus (strain bovine RF122 / ET3-1)).